A 535-amino-acid polypeptide reads, in one-letter code: Probable serine/threonine protein phosphatase 2A regulatory subunit B''delta (535 aa).

Residues 67-104 (SGTNSGSNSPLASMFPARNGPPLSPRNSTGSPRIARQR) form a disordered region. EF-hand domains lie at 174 to 209 (VPSF…GNML) and 387 to 422 (SSEP…QLHR). Positions 400, 402, 404, and 411 each coordinate Ca(2+).

PP2A consists of a common heterodimeric core enzyme, composed of a 36 kDa catalytic subunit (subunit C) and a 65 kDa constant regulatory subunit (PR65 or subunit A), that associates with a variety of regulatory subunits. Proteins that associate with the core dimer include three families of regulatory subunits B (the R2/B/PR55/B55, R3/B''/PR72/PR130/PR59 and R5/B'/B56 families) and cell signaling molecules.

Probable regulatory subunit of type 2A protein phosphatase. This is Probable serine/threonine protein phosphatase 2A regulatory subunit B''delta (B''DELTA) from Arabidopsis thaliana (Mouse-ear cress).